The sequence spans 1400 residues: DNA-directed RNA polymerase subunit beta' (1400 aa).

Zn(2+) is bound by residues Cys-70, Cys-72, Cys-85, and Cys-88. Mg(2+)-binding residues include Asp-460, Asp-462, and Asp-464. 4 residues coordinate Zn(2+): Cys-814, Cys-888, Cys-895, and Cys-898. Residues 1368–1400 (RQAKRAEAQEGPSAEQATDNLAALLNAGFSSDE) form a disordered region.

Belongs to the RNA polymerase beta' chain family. The RNAP catalytic core consists of 2 alpha, 1 beta, 1 beta' and 1 omega subunit. When a sigma factor is associated with the core the holoenzyme is formed, which can initiate transcription. Requires Mg(2+) as cofactor. It depends on Zn(2+) as a cofactor.

The catalysed reaction is RNA(n) + a ribonucleoside 5'-triphosphate = RNA(n+1) + diphosphate. Its function is as follows. DNA-dependent RNA polymerase catalyzes the transcription of DNA into RNA using the four ribonucleoside triphosphates as substrates. The chain is DNA-directed RNA polymerase subunit beta' from Vibrio parahaemolyticus serotype O3:K6 (strain RIMD 2210633).